Here is a 186-residue protein sequence, read N- to C-terminus: Thioredoxin M2, chloroplastic (186 aa).

Residues 1 to 72 (MAAFTCTSRP…RVSRLRRAVV (72 aa)) constitute a chloroplast transit peptide. The Thioredoxin domain occupies 73–186 (CEAQETTTDI…LTSSLDKFLP (114 aa)). Residues Cys110 and Cys113 each act as nucleophile in the active site. Cysteines 110 and 113 form a disulfide.

The protein belongs to the thioredoxin family. Plant M-type subfamily. In terms of assembly, interacts with G6PD1 and G6PD4. Interacts with PGL3.

It localises to the plastid. The protein resides in the chloroplast stroma. Thiol-disulfide oxidoreductase that may participate in various redox reactions. May activate NADP-malate dehydrogenase. The chain is Thioredoxin M2, chloroplastic from Arabidopsis thaliana (Mouse-ear cress).